A 429-amino-acid polypeptide reads, in one-letter code: Adenylosuccinate synthetase (429 aa).

GTP is bound by residues 12-18 (GDEGKGK) and 40-42 (GHT). Catalysis depends on Asp13, which acts as the Proton acceptor. Mg(2+) is bound by residues Asp13 and Gly40. IMP is bound by residues 13–16 (DEGK), 38–41 (NAGH), Thr129, Arg143, Gln223, Thr238, and Arg302. His41 (proton donor) is an active-site residue. 298 to 304 (TVTGRPR) is a binding site for substrate. Residues Arg304, 330 to 332 (KLD), and 412 to 414 (STS) contribute to the GTP site.

It belongs to the adenylosuccinate synthetase family. In terms of assembly, homodimer. It depends on Mg(2+) as a cofactor.

Its subcellular location is the cytoplasm. The catalysed reaction is IMP + L-aspartate + GTP = N(6)-(1,2-dicarboxyethyl)-AMP + GDP + phosphate + 2 H(+). Its pathway is purine metabolism; AMP biosynthesis via de novo pathway; AMP from IMP: step 1/2. Plays an important role in the de novo pathway of purine nucleotide biosynthesis. Catalyzes the first committed step in the biosynthesis of AMP from IMP. This chain is Adenylosuccinate synthetase, found in Rhodospirillum rubrum (strain ATCC 11170 / ATH 1.1.1 / DSM 467 / LMG 4362 / NCIMB 8255 / S1).